Reading from the N-terminus, the 60-residue chain is Large ribosomal subunit protein uL30 (60 aa).

It belongs to the universal ribosomal protein uL30 family. As to quaternary structure, part of the 50S ribosomal subunit.

The protein is Large ribosomal subunit protein uL30 of Streptococcus pneumoniae serotype 2 (strain D39 / NCTC 7466).